We begin with the raw amino-acid sequence, 473 residues long: Ribulose bisphosphate carboxylase large chain (473 aa).

Residues asparagine 116 and threonine 166 each coordinate substrate. The active-site Proton acceptor is lysine 168. Residue lysine 170 participates in substrate binding. Residues lysine 194, aspartate 196, and glutamate 197 each contribute to the Mg(2+) site. N6-carboxylysine is present on lysine 194. The Proton acceptor role is filled by histidine 287. 3 residues coordinate substrate: arginine 288, histidine 320, and serine 372.

Belongs to the RuBisCO large chain family. Type I subfamily. Heterohexadecamer of 8 large chains and 8 small chains. Mg(2+) is required as a cofactor.

The catalysed reaction is 2 (2R)-3-phosphoglycerate + 2 H(+) = D-ribulose 1,5-bisphosphate + CO2 + H2O. It catalyses the reaction D-ribulose 1,5-bisphosphate + O2 = 2-phosphoglycolate + (2R)-3-phosphoglycerate + 2 H(+). Its function is as follows. RuBisCO catalyzes two reactions: the carboxylation of D-ribulose 1,5-bisphosphate, the primary event in carbon dioxide fixation, as well as the oxidative fragmentation of the pentose substrate. Both reactions occur simultaneously and in competition at the same active site. This Nitrosomonas eutropha (strain DSM 101675 / C91 / Nm57) protein is Ribulose bisphosphate carboxylase large chain.